The following is a 72-amino-acid chain: Translation initiation factor IF-1 (72 aa).

The region spanning Met-1 to Lys-72 is the S1-like domain.

Belongs to the IF-1 family. In terms of assembly, component of the 30S ribosomal translation pre-initiation complex which assembles on the 30S ribosome in the order IF-2 and IF-3, IF-1 and N-formylmethionyl-tRNA(fMet); mRNA recruitment can occur at any time during PIC assembly.

It localises to the cytoplasm. In terms of biological role, one of the essential components for the initiation of protein synthesis. Stabilizes the binding of IF-2 and IF-3 on the 30S subunit to which N-formylmethionyl-tRNA(fMet) subsequently binds. Helps modulate mRNA selection, yielding the 30S pre-initiation complex (PIC). Upon addition of the 50S ribosomal subunit IF-1, IF-2 and IF-3 are released leaving the mature 70S translation initiation complex. The protein is Translation initiation factor IF-1 of Corynebacterium diphtheriae (strain ATCC 700971 / NCTC 13129 / Biotype gravis).